An 853-amino-acid chain; its full sequence is DNA mismatch repair protein MutS (853 aa).

Residue 614-621 (GPNMGGKS) coordinates ATP.

The protein belongs to the DNA mismatch repair MutS family.

In terms of biological role, this protein is involved in the repair of mismatches in DNA. It is possible that it carries out the mismatch recognition step. This protein has a weak ATPase activity. This is DNA mismatch repair protein MutS from Cronobacter sakazakii (strain ATCC BAA-894) (Enterobacter sakazakii).